A 54-amino-acid polypeptide reads, in one-letter code: Large ribosomal subunit protein bL33 (54 aa).

It belongs to the bacterial ribosomal protein bL33 family.

The protein is Large ribosomal subunit protein bL33 of Corynebacterium glutamicum (strain R).